Here is a 258-residue protein sequence, read N- to C-terminus: Ribosomal RNA small subunit methyltransferase J (258 aa).

Residues 123–124 (ER) and D177 each bind S-adenosyl-L-methionine. A disordered region spans residues 232 to 258 (IDGPKPSHSLEGKSSRYDIYPKKALKA). Positions 239–252 (HSLEGKSSRYDIYP) are enriched in basic and acidic residues.

The protein belongs to the methyltransferase superfamily. RsmJ family.

It localises to the cytoplasm. It carries out the reaction guanosine(1516) in 16S rRNA + S-adenosyl-L-methionine = N(2)-methylguanosine(1516) in 16S rRNA + S-adenosyl-L-homocysteine + H(+). Functionally, specifically methylates the guanosine in position 1516 of 16S rRNA. In Pseudomonas putida (strain ATCC 47054 / DSM 6125 / CFBP 8728 / NCIMB 11950 / KT2440), this protein is Ribosomal RNA small subunit methyltransferase J.